Consider the following 442-residue polypeptide: Histidine--tRNA ligase (442 aa).

Belongs to the class-II aminoacyl-tRNA synthetase family. As to quaternary structure, homodimer.

It is found in the cytoplasm. It catalyses the reaction tRNA(His) + L-histidine + ATP = L-histidyl-tRNA(His) + AMP + diphosphate + H(+). The protein is Histidine--tRNA ligase of Wolinella succinogenes (strain ATCC 29543 / DSM 1740 / CCUG 13145 / JCM 31913 / LMG 7466 / NCTC 11488 / FDC 602W) (Vibrio succinogenes).